The primary structure comprises 463 residues: L-seryl-tRNA(Sec) selenium transferase (463 aa).

At lysine 295 the chain carries N6-(pyridoxal phosphate)lysine.

It belongs to the SelA family. In terms of assembly, homodecamer; pentamer of dimers. Binds only one seryl-tRNA(Sec) per dimer. Requires pyridoxal 5'-phosphate as cofactor.

It localises to the cytoplasm. It carries out the reaction L-seryl-tRNA(Sec) + selenophosphate + H(+) = L-selenocysteinyl-tRNA(Sec) + phosphate. The protein operates within aminoacyl-tRNA biosynthesis; selenocysteinyl-tRNA(Sec) biosynthesis; selenocysteinyl-tRNA(Sec) from L-seryl-tRNA(Sec) (bacterial route): step 1/1. Its function is as follows. Converts seryl-tRNA(Sec) to selenocysteinyl-tRNA(Sec) required for selenoprotein biosynthesis. This chain is L-seryl-tRNA(Sec) selenium transferase, found in Escherichia coli O139:H28 (strain E24377A / ETEC).